Consider the following 67-residue polypeptide: uncharacterized protein (67 aa).

This is an uncharacterized protein from Acidianus sp. F28 (AFV-2).